We begin with the raw amino-acid sequence, 297 residues long: Phenylalanine-4-hydroxylase (297 aa).

Fe cation contacts are provided by His-138, His-143, and Glu-184.

The protein belongs to the biopterin-dependent aromatic amino acid hydroxylase family. Monomer. It depends on Fe(2+) as a cofactor.

The enzyme catalyses (6R)-L-erythro-5,6,7,8-tetrahydrobiopterin + L-phenylalanine + O2 = (4aS,6R)-4a-hydroxy-L-erythro-5,6,7,8-tetrahydrobiopterin + L-tyrosine. The protein operates within amino-acid degradation; L-phenylalanine degradation; acetoacetate and fumarate from L-phenylalanine: step 1/6. This Chromobacterium violaceum (strain ATCC 12472 / DSM 30191 / JCM 1249 / CCUG 213 / NBRC 12614 / NCIMB 9131 / NCTC 9757 / MK) protein is Phenylalanine-4-hydroxylase (phhA).